The primary structure comprises 307 residues: Nitric oxide synthase-interacting protein homolog (307 aa).

Residues 120–159 (PAMTPAHSSAAASEKPSTSSAAAAASSESSSASSISNMTN) form a disordered region. The span at 127 to 155 (SSAAASEKPSTSSAAAAASSESSSASSIS) shows a compositional bias: low complexity.

Belongs to the NOSIP family.

It is found in the cytoplasm. It localises to the nucleus. In terms of biological role, negatively regulates nitric oxide production by inducing nitric oxide synthase translocation to actin cytoskeleton and inhibiting its enzymatic activity. The polypeptide is Nitric oxide synthase-interacting protein homolog (Drosophila melanogaster (Fruit fly)).